A 229-amino-acid chain; its full sequence is Cytidylate kinase (229 aa).

12-20 (GPSGSGKGT) is an ATP binding site.

It belongs to the cytidylate kinase family. Type 1 subfamily.

Its subcellular location is the cytoplasm. It catalyses the reaction CMP + ATP = CDP + ADP. It carries out the reaction dCMP + ATP = dCDP + ADP. This Pseudomonas fluorescens (strain SBW25) protein is Cytidylate kinase.